Here is a 277-residue protein sequence, read N- to C-terminus: 3-methyl-2-oxobutanoate hydroxymethyltransferase (277 aa).

Positions 43 and 82 each coordinate Mg(2+). Residues 43–44 (DS), Asp-82, and Lys-112 each bind 3-methyl-2-oxobutanoate. Mg(2+) is bound at residue Glu-114. The Proton acceptor role is filled by Glu-181.

This sequence belongs to the PanB family. Homodecamer; pentamer of dimers. Mg(2+) is required as a cofactor.

It localises to the cytoplasm. It catalyses the reaction 3-methyl-2-oxobutanoate + (6R)-5,10-methylene-5,6,7,8-tetrahydrofolate + H2O = 2-dehydropantoate + (6S)-5,6,7,8-tetrahydrofolate. Its pathway is cofactor biosynthesis; (R)-pantothenate biosynthesis; (R)-pantoate from 3-methyl-2-oxobutanoate: step 1/2. Catalyzes the reversible reaction in which hydroxymethyl group from 5,10-methylenetetrahydrofolate is transferred onto alpha-ketoisovalerate to form ketopantoate. The polypeptide is 3-methyl-2-oxobutanoate hydroxymethyltransferase (Listeria monocytogenes serovar 1/2a (strain ATCC BAA-679 / EGD-e)).